The sequence spans 43 residues: Thymosin beta-b (43 aa).

Composition is skewed to basic and acidic residues over residues 1–25 and 33–43; these read MADK…ETQE and ETIEQEKQCEA. Positions 1-43 are disordered; that stretch reads MADKPDISEVSQFDKTKLKKTETQEKNTLPTKETIEQEKQCEA.

It belongs to the thymosin beta family.

The protein resides in the cytoplasm. It localises to the cytoskeleton. Its function is as follows. Plays an important role in the organization of the cytoskeleton. Binds to and sequesters actin monomers (G actin) and therefore inhibits actin polymerization. The sequence is that of Thymosin beta-b from Cyprinus carpio (Common carp).